A 159-amino-acid chain; its full sequence is Putative 4-hydroxy-4-methyl-2-oxoglutarate aldolase (159 aa).

Residues 75–78 (GDQL) and R97 each bind substrate. Residue D98 coordinates a divalent metal cation.

Belongs to the class II aldolase/RraA-like family. Homotrimer. The cofactor is a divalent metal cation.

The catalysed reaction is 4-hydroxy-4-methyl-2-oxoglutarate = 2 pyruvate. The enzyme catalyses oxaloacetate + H(+) = pyruvate + CO2. In terms of biological role, catalyzes the aldol cleavage of 4-hydroxy-4-methyl-2-oxoglutarate (HMG) into 2 molecules of pyruvate. Also contains a secondary oxaloacetate (OAA) decarboxylase activity due to the common pyruvate enolate transition state formed following C-C bond cleavage in the retro-aldol and decarboxylation reactions. This is Putative 4-hydroxy-4-methyl-2-oxoglutarate aldolase from Laribacter hongkongensis (strain HLHK9).